A 423-amino-acid chain; its full sequence is CinA-like protein (423 aa).

Belongs to the CinA family.

The polypeptide is CinA-like protein (Synechococcus sp. (strain CC9311)).